Here is an 82-residue protein sequence, read N- to C-terminus: Putative membrane protein insertion efficiency factor (82 aa).

It belongs to the UPF0161 family.

Its subcellular location is the cell inner membrane. Could be involved in insertion of integral membrane proteins into the membrane. This Synechococcus elongatus (strain ATCC 33912 / PCC 7942 / FACHB-805) (Anacystis nidulans R2) protein is Putative membrane protein insertion efficiency factor.